Here is a 352-residue protein sequence, read N- to C-terminus: N-acetyl-gamma-glutamyl-phosphate reductase (352 aa).

Residue C151 is part of the active site.

The protein belongs to the NAGSA dehydrogenase family. Type 1 subfamily.

The protein resides in the cytoplasm. It carries out the reaction N-acetyl-L-glutamate 5-semialdehyde + phosphate + NADP(+) = N-acetyl-L-glutamyl 5-phosphate + NADPH + H(+). The protein operates within amino-acid biosynthesis; L-arginine biosynthesis; N(2)-acetyl-L-ornithine from L-glutamate: step 3/4. Its function is as follows. Catalyzes the NADPH-dependent reduction of N-acetyl-5-glutamyl phosphate to yield N-acetyl-L-glutamate 5-semialdehyde. This Renibacterium salmoninarum (strain ATCC 33209 / DSM 20767 / JCM 11484 / NBRC 15589 / NCIMB 2235) protein is N-acetyl-gamma-glutamyl-phosphate reductase.